The chain runs to 189 residues: Inner membrane-spanning protein YciB (189 aa).

The next 5 membrane-spanning stretches (helical) occupy residues 23 to 43 (ILLATLVLIPATLAQVAFVWW), 54 to 74 (ITLALVVVMGGATVIFHDAAF), 82 to 102 (VNWLFAFAFLVAPLFGGKTLI), 120 to 140 (LNLAWVAFFIALGAINVYVFK), and 150 to 170 (FKLFGMLGLTLLFVLGQGVYL).

It belongs to the YciB family.

The protein localises to the cell inner membrane. Functionally, plays a role in cell envelope biogenesis, maintenance of cell envelope integrity and membrane homeostasis. The polypeptide is Inner membrane-spanning protein YciB (Chromohalobacter salexigens (strain ATCC BAA-138 / DSM 3043 / CIP 106854 / NCIMB 13768 / 1H11)).